Consider the following 471-residue polypeptide: MGIIRFQILNPTRICRSTIYYMSCRYLPSSSSSSSPLRVSSSSSQKPSFDFSRRWHFGHPDHHQQYQKPGEEGEKIFRLGLTADIGLSVAKALTGYLCGSTAIIADAAHSVSDVVLSGVALVSYRAANVPKDKEHPYGHGKFETLGALGISAMLLATGSGIAWHALDLLSIALSAAPEVIHSGHHHGIDMNHPILALTVTIASISIKEGLYWITKRAGEKQGSGLMMANAWHHRSDAISSLVALVGVGGSILGVNFLDPLAGLVVSTMIVNAGLKTGHQSILELVDAAIPAQQLEPIRQTILQVEGVKGCHRLRGRRAGSSLYLDVHIVVDPFSSVSVAHEVGEYVRRQINLNHPEVSEVFIHIDPAFLQFSCSTKDHDSITKESNICQEIKHVEATVSDIFSSQLSEKLTIKRITPHLLHSKILLQIVVAMPSTMSIQDVMIAAEHAEKEILKAAPNVARVSIQLSLNSE.

Residues 1 to 78 (MGIIRFQILN…PGEEGEKIFR (78 aa)) are Cytoplasmic-facing. Residues 79-99 (LGLTADIGLSVAKALTGYLCG) traverse the membrane as a helical segment. The Vacuolar portion of the chain corresponds to 100 to 101 (ST). A helical membrane pass occupies residues 102–122 (AIIADAAHSVSDVVLSGVALV). The Cytoplasmic segment spans residues 123-144 (SYRAANVPKDKEHPYGHGKFET). A helical membrane pass occupies residues 145-165 (LGALGISAMLLATGSGIAWHA). Over 166–192 (LDLLSIALSAAPEVIHSGHHHGIDMNH) the chain is Vacuolar. A helical transmembrane segment spans residues 193–213 (PILALTVTIASISIKEGLYWI). Topologically, residues 214–236 (TKRAGEKQGSGLMMANAWHHRSD) are cytoplasmic. Residues 237–257 (AISSLVALVGVGGSILGVNFL) form a helical membrane-spanning segment. Over 258 to 423 (DPLAGLVVST…RITPHLLHSK (166 aa)) the chain is Vacuolar. The chain crosses the membrane as a helical span at residues 424–444 (ILLQIVVAMPSTMSIQDVMIA). At 445–471 (AEHAEKEILKAAPNVARVSIQLSLNSE) the chain is on the cytoplasmic side.

The protein belongs to the cation diffusion facilitator (CDF) transporter (TC 2.A.4) family.

Its subcellular location is the vacuole membrane. Functionally, involved in sequestration of excess metal in the cytoplasm into vacuoles to maintain metal homeostasis. The protein is Metal tolerance protein C1 (MTPC1) of Arabidopsis thaliana (Mouse-ear cress).